The following is a 304-amino-acid chain: GDP-6-deoxy-D-mannose reductase (304 aa).

NADP(+)-binding positions include 13-14 and 39-40; these read FV and DL. 105–106 is a binding site for substrate; it reads SG. Tyrosine 131 is a binding site for NADP(+). Substrate contacts are provided by residues asparagine 160, arginine 200, and 260 to 263; that span reads RRAE.

The protein belongs to the NAD(P)-dependent epimerase/dehydratase family. GDP-6-deoxy-D-mannose reductase subfamily.

It carries out the reaction GDP-alpha-D-rhamnose + NAD(+) = GDP-4-dehydro-alpha-D-rhamnose + NADH + H(+). The catalysed reaction is GDP-alpha-D-rhamnose + NADP(+) = GDP-4-dehydro-alpha-D-rhamnose + NADPH + H(+). Its function is as follows. Reductase that catalyzes the conversion of GDP-6-deoxy-D-mannose to GDP-4-dehydro-6-deoxy-D-mannose (GDP-D-rhamnose). The chain is GDP-6-deoxy-D-mannose reductase (rmd) from Pseudomonas aeruginosa (strain ATCC 15692 / DSM 22644 / CIP 104116 / JCM 14847 / LMG 12228 / 1C / PRS 101 / PAO1).